We begin with the raw amino-acid sequence, 1435 residues long: DNA polymerase III PolC-type (1435 aa).

The 159-residue stretch at 404 to 562 folds into the Exonuclease domain; it reads YVVYDIETTG…YDSSVLTNIF (159 aa).

It belongs to the DNA polymerase type-C family. PolC subfamily.

The protein resides in the cytoplasm. It catalyses the reaction DNA(n) + a 2'-deoxyribonucleoside 5'-triphosphate = DNA(n+1) + diphosphate. Required for replicative DNA synthesis. This DNA polymerase also exhibits 3' to 5' exonuclease activity. The chain is DNA polymerase III PolC-type from Mycoplasmopsis pulmonis (strain UAB CTIP) (Mycoplasma pulmonis).